The sequence spans 574 residues: MELLIHRLSAIFLTLAINALYLTSSQNITEEFYQSTCSAVSRGYFSALRTGWYTSVITIELSNIKETKCNGTDTKVKLIKQELDKYKNAVTELQLLMQNTPAANNRARREAPQYMNYTINTTKNLNVSISKKRKRRFLGFLLGVGSAIASGIAVSKVLHLEGEVNKIKNALLSTNKAVVSLSNGVSVLTSKVLDLKNYINNQLLPIVNQQSCRISNIETVIEFQQKNSRLLEINREFSVNAGVTTPLSTYMLTNSELLSLINDMPITNDQKKLMSSNVQIVRQQSYSIMSIIKEEVLAYVVQLPIYGVIDTPCWKLHTSPLCTTNIKEGSNICLTRTDRGWYCDNAGSVSFFPQADTCKVQSNRVFCDTMNSLTLPSEVSLCNTDIFNSKYDCKIMTSKTDISSSVITSLGAIVSCYGKTKCTASNKNRGIIKTFSNGCDYVSNKGVDTVSVGNTLYYVNKLEGKNLYVKGEPIINYYDPLVFPSDEFDASISQVNEKINQSLAFIRRSDELLHNVNTGKSTTNIMITTIIIVIIVVLLSLIAIGLLLYCKAKNTPVTLSKDQLSGINNIAFSK.

Positions 1–25 (MELLIHRLSAIFLTLAINALYLTSS) are cleaved as a signal peptide. Residues 26–524 (QNITEEFYQS…NVNTGKSTTN (499 aa)) lie on the Extracellular side of the membrane. Residues Asn27 and Asn70 are each glycosylated (N-linked (GlcNAc...) asparagine; by host). 7 disulfide bridges follow: Cys37–Cys439, Cys69–Cys212, Cys313–Cys343, Cys322–Cys333, Cys358–Cys367, Cys382–Cys393, and Cys416–Cys422. The stretch at 76–96 (VKLIKQELDKYKNAVTELQLL) forms a coiled coil. Asn116, Asn120, and Asn126 each carry an N-linked (GlcNAc...) asparagine; by host glycan. Residues 137-157 (FLGFLLGVGSAIASGIAVSKV) form a fusion peptide region. The stretch at 158-209 (LHLEGEVNKIKNALLSTNKAVVSLSNGVSVLTSKVLDLKNYINNQLLPIVNQ) forms a coiled coil. Residues 481-516 (LVFPSDEFDASISQVNEKINQSLAFIRRSDELLHNV) are a coiled coil. N-linked (GlcNAc...) asparagine; by host glycosylation occurs at Asn500. Residues 525-550 (IMITTIIIVIIVVLLSLIAIGLLLYC) form a helical membrane-spanning segment. Cys550 carries the S-palmitoyl cysteine; by host lipid modification. Residues 551-574 (KAKNTPVTLSKDQLSGINNIAFSK) are Cytoplasmic-facing.

It belongs to the paramyxoviruses fusion glycoprotein family. In terms of assembly, homotrimer. Heterodimer with fusion protein F2; disulfide-linked. Interacts with host NCL; this interaction plays a role in viral entry into the host cell. As a heterodimer with F2, interacts with host heparan sulfate. As a heterodimer with F2, interacts with host IGF1R; this interaction activates PRKCZ/PKCzeta that recruits NCL/nucleolin from the host nucleus to the plasma membrane. Part of a complex composed of F1, F2 and G glycoproteins. As a heterodimer with F2, interacts with host RHOA; this interaction facilitates virus-induced syncytium formation. As to quaternary structure, homotrimer. Heterodimer with fusion protein F1; disulfide-linked. As a heterodimer with F1, interacts with host heparan sulfate. As a heterodimer with F1, interacts with host IGF1R; this interaction activates PRKCZ/PKCzeta that recruits NCL/nucleolin from the host nucleus to the plasma membrane. Part of a complex composed of F1, F2 and G glycoproteins. As a heterodimer with F1, interacts with host RHOA; this interaction facilitates virus-induced syncytium formation. Post-translationally, the F glycoprotein is synthesized as a F0 inactive precursor that is heavily N-glycosylated and processed at two sites by a host furin-like protease probably in the Golgi. The cleavage site between p27 and F1 may occur after endocytosis to yield the mature F1 and F2 proteins. Both cleavages are required for membrane fusion and p27 is released from the processed protein.

Its subcellular location is the host Golgi apparatus membrane. It localises to the virion membrane. The protein localises to the host cell membrane. Inactive precursor that is cleaved at two sites by a furin-like protease to give rise to the mature F1 and F2 fusion glycoproteins. Functionally, class I viral fusion protein. Under the current model, the protein has at least 3 conformational states: pre-fusion native state, pre-hairpin intermediate state, and post-fusion hairpin state. During viral and plasma cell membrane fusion, the coiled coil regions assume a trimer-of-hairpins structure, positioning the fusion peptide in close proximity to the C-terminal region of the ectodomain. The formation of this structure appears to drive apposition and subsequent fusion of viral and cellular membranes leading to delivery of the nucleocapsid into the cytoplasm. This fusion is pH independent and occurs at the plasma or endosomal membrane. The trimer of F1-F2 (F protein) also facilitates the attachment to host cell by binding to host heparan sulfate. F protein is involved in the entry into the host cell through the interaction with host IGF1R. This interaction activates PRKCZ/PKCzeta that recruits host NCL/nucleolin to the apical cell surface where it can bind fusion glycoprotein F1. Later in infection, F protein expressed at the plasma membrane of infected cells can mediate fusion with adjacent cells to form syncytia, a cytopathic effect that could lead to tissue necrosis. F protein may trigger p53-dependent apoptosis. Its function is as follows. Major determinant of the species specificity of RSV infection. The trimer of F1-F2 (F protein) also facilitates the attachment to host cell by binding to host heparan sulfate. F protein is involved in the entry into the host cell through the interaction with host IGF1R. This interaction activates PRKCZ/PKCzeta that recruits host NCL/nucleolin to the apical cell surface where it can bind fusion glycoprotein F1. Later in infection, F protein expressed at the plasma membrane of infected cells can mediate fusion with adjacent cells to form syncytia, a cytopathic effect that could lead to tissue necrosis. F protein seems to trigger p53-dependent apoptosis. This is Fusion glycoprotein F0 (F) from Human respiratory syncytial virus B (strain B1).